The primary structure comprises 459 residues: tRNA modification GTPase MnmE (459 aa).

Residues Arg22, Glu85, and Arg124 each coordinate (6S)-5-formyl-5,6,7,8-tetrahydrofolate. Residues 221-380 form the TrmE-type G domain; that stretch reads GLSTVIVGKP…LELQIRDLFF (160 aa). Residue Asn231 participates in K(+) binding. GTP-binding positions include 231–236, 250–256, and 275–278; these read NVGKSS, TEVAGTT, and DTAG. Ser235 provides a ligand contact to Mg(2+). Residues Thr250, Val252, and Thr255 each contribute to the K(+) site. Mg(2+) is bound at residue Thr256. Lys459 contributes to the (6S)-5-formyl-5,6,7,8-tetrahydrofolate binding site.

This sequence belongs to the TRAFAC class TrmE-Era-EngA-EngB-Septin-like GTPase superfamily. TrmE GTPase family. In terms of assembly, homodimer. Heterotetramer of two MnmE and two MnmG subunits. The cofactor is K(+).

It is found in the cytoplasm. Functionally, exhibits a very high intrinsic GTPase hydrolysis rate. Involved in the addition of a carboxymethylaminomethyl (cmnm) group at the wobble position (U34) of certain tRNAs, forming tRNA-cmnm(5)s(2)U34. The polypeptide is tRNA modification GTPase MnmE (Staphylococcus haemolyticus (strain JCSC1435)).